Reading from the N-terminus, the 91-residue chain is Small ribosomal subunit protein uS19 (91 aa).

Belongs to the universal ribosomal protein uS19 family.

Protein S19 forms a complex with S13 that binds strongly to the 16S ribosomal RNA. The sequence is that of Small ribosomal subunit protein uS19 from Ectopseudomonas mendocina (strain ymp) (Pseudomonas mendocina).